A 334-amino-acid polypeptide reads, in one-letter code: Protein-methionine-sulfoxide reductase catalytic subunit MsrP (334 aa).

Residues 1–44 constitute a signal peptide (tat-type signal); the sequence is MKKNQFLKESDVTAESVFFMKRRQVLKALGISAAALSLPHAAHA. Mo-molybdopterin is bound by residues asparagine 88, 91-92, cysteine 146, threonine 181, asparagine 233, arginine 238, and 249-251; these read YE and GIK.

It belongs to the MsrP family. As to quaternary structure, heterodimer of a catalytic subunit (MsrP) and a heme-binding subunit (MsrQ). Mo-molybdopterin is required as a cofactor. Post-translationally, predicted to be exported by the Tat system. The position of the signal peptide cleavage has not been experimentally proven.

It is found in the periplasm. The catalysed reaction is L-methionyl-[protein] + a quinone + H2O = L-methionyl-(S)-S-oxide-[protein] + a quinol. It carries out the reaction L-methionyl-[protein] + a quinone + H2O = L-methionyl-(R)-S-oxide-[protein] + a quinol. Its function is as follows. Part of the MsrPQ system that repairs oxidized periplasmic proteins containing methionine sulfoxide residues (Met-O), using respiratory chain electrons. Thus protects these proteins from oxidative-stress damage caused by reactive species of oxygen and chlorine generated by the host defense mechanisms. MsrPQ is essential for the maintenance of envelope integrity under bleach stress, rescuing a wide series of structurally unrelated periplasmic proteins from methionine oxidation, including the primary periplasmic chaperone SurA and the lipoprotein Pal. The catalytic subunit MsrP is non-stereospecific, being able to reduce both (R-) and (S-) diastereoisomers of methionine sulfoxide. In Shigella boydii serotype 18 (strain CDC 3083-94 / BS512), this protein is Protein-methionine-sulfoxide reductase catalytic subunit MsrP.